The sequence spans 261 residues: MEDLAKFLFGVSGNVIALFLFLSPVPTFWRIIRRKSTEDFSGVPYNMTLINCLLSAWYGLPFVSPNNILVSTINGAGAVIETAYVVVFLVFASTHKTRLRTLGLAAAVASVFAAVALVSLLALHGQHRKLLCGVAATVCSICMYASPLSIMRLVIKTKSVEYMPFLMSLAVFLCGTSWFIYGLLGRDPFVTIPNGCGSFLGAVQLVLYAIYRNNKGAGGGSGGKQAGDDDVEMAEGRNNKVADGGAADDDSTAGGKAGTEV.

Over 1 to 6 the chain is Extracellular; the sequence is MEDLAK. Residues 7–27 traverse the membrane as a helical segment; sequence FLFGVSGNVIALFLFLSPVPT. A MtN3/slv 1 domain is found at 7 to 95; that stretch reads FLFGVSGNVI…VVFLVFASTH (89 aa). At 28-42 the chain is on the cytoplasmic side; sequence FWRIIRRKSTEDFSG. A helical transmembrane segment spans residues 43–63; that stretch reads VPYNMTLINCLLSAWYGLPFV. Residues 64-71 are Extracellular-facing; sequence SPNNILVS. A helical transmembrane segment spans residues 72–92; that stretch reads TINGAGAVIETAYVVVFLVFA. The Cytoplasmic portion of the chain corresponds to 93–101; that stretch reads STHKTRLRT. The chain crosses the membrane as a helical span at residues 102–122; it reads LGLAAAVASVFAAVALVSLLA. At 123-129 the chain is on the extracellular side; that stretch reads LHGQHRK. The helical transmembrane segment at 130 to 150 threads the bilayer; it reads LLCGVAATVCSICMYASPLSI. The MtN3/slv 2 domain maps to 133-215; the sequence is GVAATVCSIC…VLYAIYRNNK (83 aa). Topologically, residues 151–164 are cytoplasmic; the sequence is MRLVIKTKSVEYMP. The helical transmembrane segment at 165–185 threads the bilayer; the sequence is FLMSLAVFLCGTSWFIYGLLG. At 186–189 the chain is on the extracellular side; that stretch reads RDPF. A helical transmembrane segment spans residues 190 to 210; it reads VTIPNGCGSFLGAVQLVLYAI. Topologically, residues 211 to 261 are cytoplasmic; sequence YRNNKGAGGGSGGKQAGDDDVEMAEGRNNKVADGGAADDDSTAGGKAGTEV. A disordered region spans residues 218 to 261; sequence GGGSGGKQAGDDDVEMAEGRNNKVADGGAADDDSTAGGKAGTEV.

It belongs to the SWEET sugar transporter family. As to quaternary structure, forms homodimers. Highly expressed in leaves. Expressed at very low levels in roots, stems and panicles.

The protein resides in the cell membrane. It catalyses the reaction D-glucose(out) = D-glucose(in). It carries out the reaction D-galactose(in) = D-galactose(out). Functionally, mediates transport of sugars across the plasma membrane. Can transport glucose and galactose, but not fructose, mannose and sucrose. This chain is Bidirectional sugar transporter SWEET1b (SWEET1B), found in Oryza sativa subsp. japonica (Rice).